Reading from the N-terminus, the 70-residue chain is UPF0519 protein D (70 aa).

The protein belongs to the UPF0519 family.

In Dictyostelium discoideum (Social amoeba), this protein is UPF0519 protein D.